An 852-amino-acid polypeptide reads, in one-letter code: Lon protease homolog 2, peroxisomal (852 aa).

At Ser-2 the chain carries N-acetylserine. A Lon N-terminal domain is found at 13-222; sequence LPLLLTHEGV…MTIPLLVRQI (210 aa). Residue 375-382 participates in ATP binding; it reads GPPGVGKT. The region spanning 651-837 is the Lon proteolytic domain; the sequence is LSQPGVAIGL…DEVLNAAFDG (187 aa). Residues Ser-743 and Lys-786 contribute to the active site. The Microbody targeting signal motif lies at 850 to 852; sequence SKL.

It belongs to the peptidase S16 family. In terms of assembly, interacts with PEX5. Interacts with TYSND1. May interact with enzymes involved in beta-oxidation of fatty acids, including ACOX1/AOX.

Its subcellular location is the peroxisome matrix. It carries out the reaction Hydrolysis of proteins in presence of ATP.. Functionally, ATP-dependent serine protease that mediates the selective degradation of misfolded and unassembled polypeptides in the peroxisomal matrix. Necessary for type 2 peroxisome targeting signal (PTS2)-containing protein processing and facilitates peroxisome matrix protein import. May indirectly regulate peroxisomal fatty acid beta-oxidation through degradation of the self-processed forms of TYSND1. This is Lon protease homolog 2, peroxisomal from Bos taurus (Bovine).